The sequence spans 405 residues: Tryptophan synthase beta chain (405 aa).

K98 carries the N6-(pyridoxal phosphate)lysine modification.

Belongs to the TrpB family. As to quaternary structure, tetramer of two alpha and two beta chains. Pyridoxal 5'-phosphate is required as a cofactor.

It catalyses the reaction (1S,2R)-1-C-(indol-3-yl)glycerol 3-phosphate + L-serine = D-glyceraldehyde 3-phosphate + L-tryptophan + H2O. The protein operates within amino-acid biosynthesis; L-tryptophan biosynthesis; L-tryptophan from chorismate: step 5/5. In terms of biological role, the beta subunit is responsible for the synthesis of L-tryptophan from indole and L-serine. In Afipia carboxidovorans (strain ATCC 49405 / DSM 1227 / KCTC 32145 / OM5) (Oligotropha carboxidovorans), this protein is Tryptophan synthase beta chain.